A 102-amino-acid chain; its full sequence is Urease subunit beta (102 aa).

This sequence belongs to the urease beta subunit family. In terms of assembly, heterotrimer of UreA (gamma), UreB (beta) and UreC (alpha) subunits. Three heterotrimers associate to form the active enzyme.

Its subcellular location is the cytoplasm. The catalysed reaction is urea + 2 H2O + H(+) = hydrogencarbonate + 2 NH4(+). It participates in nitrogen metabolism; urea degradation; CO(2) and NH(3) from urea (urease route): step 1/1. The chain is Urease subunit beta from Bordetella pertussis (strain Tohama I / ATCC BAA-589 / NCTC 13251).